Consider the following 520-residue polypeptide: Pentatricopeptide repeat-containing protein At1g28690, mitochondrial (520 aa).

A mitochondrion-targeting transit peptide spans 1–19 (MRIFRFTSISPRILPSNHY). PPR repeat units follow at residues 68 to 98 (DLNI…LPKP), 99 to 133 (TLSA…GEKA), 134 to 168 (DGYT…RIIK), 174 to 208 (DDVL…NVVC), 209 to 235 (CTSM…TKVK), 236 to 271 (DIVV…GFHP), 272 to 306 (NIST…GVYT), 307 to 337 (HIKM…MQEK), 338 to 372 (NVFS…RIEP), 373 to 403 (NYVT…MQRD), and 409 to 439 (KMEH…MPER). A type E motif region spans residues 444–520 (IWAALLSSCN…TIGRSWTSED (77 aa)).

The protein belongs to the PPR family. PCMP-E subfamily.

The protein localises to the mitochondrion. In Arabidopsis thaliana (Mouse-ear cress), this protein is Pentatricopeptide repeat-containing protein At1g28690, mitochondrial (PCMP-E34).